A 176-amino-acid polypeptide reads, in one-letter code: Large ribosomal subunit protein bL17 (176 aa).

The interval 124–176 is disordered; the sequence is AAPKAARQDRSKRVKGSRKTEASAAKAAPAAQAAPELPAESDAPAAEAAPTEE. A compositionally biased stretch (low complexity) spans 145–176; that stretch reads ASAAKAAPAAQAAPELPAESDAPAAEAAPTEE.

Belongs to the bacterial ribosomal protein bL17 family. In terms of assembly, part of the 50S ribosomal subunit. Contacts protein L32.

The sequence is that of Large ribosomal subunit protein bL17 from Chlorobium phaeovibrioides (strain DSM 265 / 1930) (Prosthecochloris vibrioformis (strain DSM 265)).